The following is a 78-amino-acid chain: Sec-independent protein translocase protein TatA (78 aa).

The helical transmembrane segment at 1 to 21 (MGSLSIWHWIVVLAVVLLLFG) threads the bilayer. The interval 43–78 (LAEDDEPAKTPAAPPEAPRPLPHQTSSAAEAEKKPV) is disordered. Residues 54 to 63 (AAPPEAPRPL) show a composition bias toward pro residues.

This sequence belongs to the TatA/E family. The Tat system comprises two distinct complexes: a TatABC complex, containing multiple copies of TatA, TatB and TatC subunits, and a separate TatA complex, containing only TatA subunits. Substrates initially bind to the TatABC complex, which probably triggers association of the separate TatA complex to form the active translocon.

The protein localises to the cell inner membrane. Its function is as follows. Part of the twin-arginine translocation (Tat) system that transports large folded proteins containing a characteristic twin-arginine motif in their signal peptide across membranes. TatA could form the protein-conducting channel of the Tat system. The chain is Sec-independent protein translocase protein TatA from Xanthobacter autotrophicus (strain ATCC BAA-1158 / Py2).